The following is a 119-amino-acid chain: MLHWGPKFWRTLHLYAIFFSDTPGWKEKYEAIQWILNFIESLPCTMCRHHAFSYLTKNPLTLNNSEDFQYWTFAFHNNVNKRLNKKIISWSEYKNIYEQSILNTIEYGKTDFIGAWSSL.

In terms of domain architecture, ERV/ALR sulfhydryl oxidase spans 1 to 97 (MLHWGPKFWR…ISWSEYKNIY (97 aa)). Cys44 and Cys47 are joined by a disulfide.

It belongs to the asfivirus B119L family. In terms of assembly, interacts with A151R. It depends on FAD as a cofactor.

The protein localises to the host cytoplasm. The protein resides in the virion. The enzyme catalyses 2 R'C(R)SH + O2 = R'C(R)S-S(R)CR' + H2O2. Its function is as follows. FAD-dependent sulfhydryl oxidase that catalyzes the formation of disulfide bonds in viral proteins produced in the cell cytoplasm. Involved in virion maturation. The sequence is that of FAD-linked sulfhydryl oxidase from Ornithodoros (relapsing fever ticks).